The chain runs to 217 residues: Non-structural protein NS3 (217 aa).

This sequence belongs to the orbivirus NS3 family.

May play a role in the release of virions from infected cells. The protein is Non-structural protein NS3 (Segment-10) of African horse sickness virus 9 (AHSV-9).